The chain runs to 739 residues: MSEEISLSAEFIDRVKASVKPHWGKLGWVTYKRTYARWLPEKGRSENWDETVKRVVEGNINLDPRLQDSPSLELKQSLTEEAERLYKLIYGLGATPSGRNLWISGTDYQRRTGDSLNNCWFVAIRPQKYGDSKIVPSYLGKQEKAVSMPFSFLFDELMKGGGVGFSVARSNISQIPRVDFAIDLQLVVDETSESYDASVKVGAVGKNELVQDADSIYYRLPDTREGWVLANALLIDLHFAQTNPDRKQKLILDLSDIRPYGAEIHGFGGTASGPMPLISMLLDVNEVLNNKAGGRLTAVDAADICNLIGKAVVAGNVRRSAELALGSNDDQDFISMKQDQEKLMHHRWASNNSVAVDSAFSGYQPIAAGIRENGEPGIVNLDLSKNYGRIVDGYQAGIDGDVEGTNPCGEISLANGEPCNLFEVFPLIAEEQGWDLQEVFALAARYAKRVTFSPYDWEISREIIQKNRRIGISMSGIQDWLLTRLGNRVVTGFKDDFDPETHEAIKVPVYDKRAIKMVDQLYKAVVKADQDYSKTLGCNESIKHTTVKPSGTVAKLAGASEGMHFHYGAYLIQRIRFQDSDPLLPALKACGYRTEADIYTENTTCVEFPIKAVGADNPNFASAGTVSIAEQFATQAFLQTYWSDNAVSCTITFQDSEGDQVESLLRQYRFITKSTSLLPYFGGSLQQAPKEPIDKETYEKRSQEITGNVEEVFSQLNSDVKDLELVDQTDCEGGACPIK.

Cys119 and Cys419 form a disulfide bridge. The effector region-1 stretch occupies residues 147–158 (SMPFSFLFDELM). The tract at residues 168-313 (ARSNISQIPR…ICNLIGKAVV (146 aa)) is effector region-2. Active-site residues include Cys408 and Glu410. The adenosylcobalamin-binding-1 stretch occupies residues 565–626 (FHYGAYLIQR…NPNFASAGTV (62 aa)). Residues 685-724 (LQQAPKEPIDKETYEKRSQEITGNVEEVFSQLNSDVKDLE) form an adenosylcobalamin-binding-2 region.

Belongs to the class II ribonucleoside-triphosphate reductase family. In terms of assembly, monomer. Requires adenosylcob(III)alamin as cofactor.

It catalyses the reaction a 2'-deoxyribonucleoside 5'-triphosphate + [thioredoxin]-disulfide + H2O = a ribonucleoside 5'-triphosphate + [thioredoxin]-dithiol. Allosterically regulated by ATP and dNTP. This chain is Adenosylcobalamin-dependent ribonucleoside-triphosphate reductase (rtpR), found in Lactobacillus leichmannii.